The chain runs to 298 residues: Protoheme IX farnesyltransferase (298 aa).

The next 9 membrane-spanning stretches (helical) occupy residues 16-36 (VVAL…PDMP), 45-65 (ALGF…NQLL), 93-113 (VFAG…VNVI), 114-134 (TAVL…VYLK), 141-161 (IVIG…AVTG), 172-192 (SLLV…LAIF), 223-243 (VLLA…VFYL), 244-264 (GGAI…LNPP), and 277-297 (IVYL…LPWV).

The protein belongs to the UbiA prenyltransferase family. Protoheme IX farnesyltransferase subfamily.

It is found in the cell inner membrane. It carries out the reaction heme b + (2E,6E)-farnesyl diphosphate + H2O = Fe(II)-heme o + diphosphate. Its pathway is porphyrin-containing compound metabolism; heme O biosynthesis; heme O from protoheme: step 1/1. Converts heme B (protoheme IX) to heme O by substitution of the vinyl group on carbon 2 of heme B porphyrin ring with a hydroxyethyl farnesyl side group. This chain is Protoheme IX farnesyltransferase, found in Xanthomonas euvesicatoria pv. vesicatoria (strain 85-10) (Xanthomonas campestris pv. vesicatoria).